Reading from the N-terminus, the 230-residue chain is Large ribosomal subunit protein uL1 (230 aa).

Belongs to the universal ribosomal protein uL1 family. Part of the 50S ribosomal subunit.

Functionally, binds directly to 23S rRNA. The L1 stalk is quite mobile in the ribosome, and is involved in E site tRNA release. Protein L1 is also a translational repressor protein, it controls the translation of the L11 operon by binding to its mRNA. The polypeptide is Large ribosomal subunit protein uL1 (Bacillus anthracis (strain A0248)).